The sequence spans 1081 residues: Mediator of RNA polymerase II transcription subunit 15 (1081 aa).

N-acetylserine is present on Ser-2. The interaction with GCN4 stretch occupies residues 25–49 (LQVLMDINTLNGGSSDTADKIRIHA). A disordered region spans residues 238–286 (QAQAQANNNNNGLPQNGNINNNINIPQQQQMQPPNSSANNNPLQQQSSQ). Ser-335 carries the post-translational modification Phosphoserine. A run of 11 repeats spans residues 422–423 (QA), 424–425 (QA), 426–427 (QA), 428–429 (QA), 430–431 (QA), 432–433 (QA), 434–435 (QA), 436–437 (QA), 438–439 (QA), 440–441 (QA), and 442–443 (QA). The 30 X 2 AA approximate tandem repeats of Q-A stretch occupies residues 422 to 481 (QAQAQAQAQAQAQAQAQAQAQAAQAAQAQAQAQAQAQAQAQAQAQAQAQAQAQAQAQAQA). One copy of the 12; approximate repeat lies at 444–445 (AQ). Residues 446-447 (AA) form a 13; approximate repeat. 17 repeat units span residues 448–449 (QA), 450–451 (QA), 452–453 (QA), 454–455 (QA), 456–457 (QA), 458–459 (QA), 460–461 (QA), 462–463 (QA), 464–465 (QA), 466–467 (QA), 468–469 (QA), 470–471 (QA), 472–473 (QA), 474–475 (QA), 476–477 (QA), 478–479 (QA), and 480–481 (QA). A compositionally biased stretch (low complexity) spans 476-497 (QAQAQAHAQHQPSQQPQQAQQQ). Disordered regions lie at residues 476–505 (QAQA…HGLT) and 692–712 (QQQQ…YSAM). Residues Ser-736, Ser-752, Ser-783, Ser-785, and Ser-789 each carry the phosphoserine modification. The tract at residues 744–836 (PVSAAATPSL…KTVQSPMGAQ (93 aa)) is disordered. Residues 749–836 (ATPSLNKTIN…KTVQSPMGAQ (88 aa)) show a composition bias toward polar residues. Position 793 is a phosphothreonine (Thr-793). Residues Ser-831, Ser-1003, Ser-1008, Ser-1018, and Ser-1034 each carry the phosphoserine modification. The interval 1026 to 1055 (DSKKIKVDSPDDPFMTKSGATTSEKQEVTN) is disordered.

The protein belongs to the Mediator complex subunit 15 family. In terms of assembly, component of the Mediator complex, which is composed of at least 21 subunits that form three structurally distinct submodules. The Mediator head module contains MED6, MED8, MED11, SRB4/MED17, SRB5/MED18, ROX3/MED19, SRB2/MED20 and SRB6/MED22, the middle module contains MED1, MED4, NUT1/MED5, MED7, CSE2/MED9, NUT2/MED10, SRB7/MED21 and SOH1/MED31, and the tail module contains MED2, PGD1/MED3, RGR1/MED14, GAL11/MED15 and SIN4/MED16. The head and the middle modules interact directly with RNA polymerase II, whereas the elongated tail module interacts with gene-specific regulatory proteins. GAL11/MED15 interacts with the activator GAL4; the interaction is direct. GAL11/MED15 interacts (via multiple regions) with the activator GCN4; the interaction is direct.

It localises to the nucleus. Its function is as follows. Component of the Mediator complex, a coactivator involved in the regulated transcription of nearly all RNA polymerase II-dependent genes. Mediator functions as a bridge to convey information from gene-specific regulatory proteins to the basal RNA polymerase II transcription machinery. The Mediator complex, having a compact conformation in its free form, is recruited to promoters by direct interactions with regulatory proteins and serves for the assembly of a functional pre-initiation complex with RNA polymerase II and the general transcription factors. The Mediator complex unfolds to an extended conformation and partially surrounds RNA polymerase II, specifically interacting with the unphosphorylated form of the C-terminal domain (CTD) of RNA polymerase II. The Mediator complex dissociates from the RNA polymerase II holoenzyme and stays at the promoter when transcriptional elongation begins. It has an important role in the negative regulation of Ty transcription. In Saccharomyces cerevisiae (strain ATCC 204508 / S288c) (Baker's yeast), this protein is Mediator of RNA polymerase II transcription subunit 15.